Here is a 194-residue protein sequence, read N- to C-terminus: Phosphoheptose isomerase (194 aa).

The SIS domain maps to 37–194 (IAKSFKNKNK…IIEKEMKKIN (158 aa)). A substrate-binding site is contributed by 52–54 (NGG). Histidine 61 and glutamate 65 together coordinate Zn(2+). Substrate contacts are provided by residues glutamate 65, 93 to 94 (ND), 119 to 121 (STS), serine 124, and glutamine 172. Positions 172 and 180 each coordinate Zn(2+).

It belongs to the SIS family. GmhA subfamily. Homotetramer. The cofactor is Zn(2+).

The protein localises to the cytoplasm. It carries out the reaction 2 D-sedoheptulose 7-phosphate = D-glycero-alpha-D-manno-heptose 7-phosphate + D-glycero-beta-D-manno-heptose 7-phosphate. Its pathway is carbohydrate biosynthesis; D-glycero-D-manno-heptose 7-phosphate biosynthesis; D-glycero-alpha-D-manno-heptose 7-phosphate and D-glycero-beta-D-manno-heptose 7-phosphate from sedoheptulose 7-phosphate: step 1/1. Catalyzes the isomerization of sedoheptulose 7-phosphate in D-glycero-D-manno-heptose 7-phosphate. This chain is Phosphoheptose isomerase, found in Buchnera aphidicola subsp. Schizaphis graminum (strain Sg).